The sequence spans 221 residues: Ras-related protein Rab-27A (221 aa).

Ser2 carries the N-acetylserine modification. The residue at position 2 (Ser2) is a Phosphoserine. 16-24 (GDSGVGKTS) is a GTP binding site. The Effector region signature appears at 38-46 (FITTVGIDF). Residues 74–78 (DTAGQ), 133–136 (NKSD), and 163–165 (SAA) contribute to the GTP site. A disulfide bridge connects residues Cys123 and Cys188. 2 S-geranylgeranyl cysteine lipidation sites follow: Cys219 and Cys221. Cys221 carries the post-translational modification Cysteine methyl ester.

This sequence belongs to the small GTPase superfamily. Rab family. As to quaternary structure, binds SYTL1, SLAC2B, MYRIP, SYTL3, SYTL4 and SYTL5. Interacts with RPH3A and RPH3A. Binds MLPH and SYTL2. Interacts with UNC13D. Does not interact with the BLOC-3 complex (heterodimer of HPS1 and HPS4). Interacts (GDP-bound form preferentially) with DENND10.

It is found in the membrane. Its subcellular location is the melanosome. It localises to the late endosome. The protein localises to the lysosome. The enzyme catalyses GTP + H2O = GDP + phosphate + H(+). Its activity is regulated as follows. Regulated by guanine nucleotide exchange factors (GEFs) which promote the exchange of bound GDP for free GTP, GTPase activating proteins (GAPs) which increase the GTP hydrolysis activity, and GDP dissociation inhibitors which inhibit the dissociation of the nucleotide from the GTPase. Activated by GEFs such as DENND10. Its function is as follows. Small GTPase which cycles between active GTP-bound and inactive GDP-bound states. In its active state, binds to a variety of effector proteins to regulate homeostasis of late endocytic pathway, including endosomal positioning, maturation and secretion. Plays a role in cytotoxic granule exocytosis in lymphocytes. Required for both granule maturation and granule docking and priming at the immunologic synapse. The protein is Ras-related protein Rab-27A (RAB27A) of Canis lupus familiaris (Dog).